A 167-amino-acid polypeptide reads, in one-letter code: NAD(P)H-quinone oxidoreductase subunit I, chloroplastic (167 aa).

4Fe-4S ferredoxin-type domains lie at 55–84 and 95–124; these read GRIHFEFDKCIACEVCVRVCPIDLPVVDWK and LNYSIDFGICIFCGNCVEYCPTNCLSMTEE. The [4Fe-4S] cluster site is built by Cys-64, Cys-67, Cys-70, Cys-74, Cys-104, Cys-107, Cys-110, and Cys-114.

This sequence belongs to the complex I 23 kDa subunit family. As to quaternary structure, NDH is composed of at least 16 different subunits, 5 of which are encoded in the nucleus. It depends on [4Fe-4S] cluster as a cofactor.

Its subcellular location is the plastid. It is found in the chloroplast thylakoid membrane. The catalysed reaction is a plastoquinone + NADH + (n+1) H(+)(in) = a plastoquinol + NAD(+) + n H(+)(out). It catalyses the reaction a plastoquinone + NADPH + (n+1) H(+)(in) = a plastoquinol + NADP(+) + n H(+)(out). In terms of biological role, NDH shuttles electrons from NAD(P)H:plastoquinone, via FMN and iron-sulfur (Fe-S) centers, to quinones in the photosynthetic chain and possibly in a chloroplast respiratory chain. The immediate electron acceptor for the enzyme in this species is believed to be plastoquinone. Couples the redox reaction to proton translocation, and thus conserves the redox energy in a proton gradient. This chain is NAD(P)H-quinone oxidoreductase subunit I, chloroplastic, found in Eucalyptus globulus subsp. globulus (Tasmanian blue gum).